Consider the following 137-residue polypeptide: Large ribosomal subunit protein uL24 (137 aa).

Belongs to the universal ribosomal protein uL24 family. In terms of assembly, part of the 50S ribosomal subunit.

Functionally, one of two assembly initiator proteins, it binds directly to the 5'-end of the 23S rRNA, where it nucleates assembly of the 50S subunit. Its function is as follows. Located at the polypeptide exit tunnel on the outside of the subunit. In Sulfurisphaera tokodaii (strain DSM 16993 / JCM 10545 / NBRC 100140 / 7) (Sulfolobus tokodaii), this protein is Large ribosomal subunit protein uL24.